A 353-amino-acid polypeptide reads, in one-letter code: MTIALGKFTKDENDLFDIMDDWLRRDRFVFVGWSGLLLFPCAYFAVGGWFTGTTFVTSWYTHGLASSYLEGCNFLTAAVSTPANSLAHSLLLLWGPEAQGDFTRWCQLGGLWTFVALHGAFGLIGFMLRQFELARSVQLRPYNAIAFSGPIAVFVSVFLIYPLGQSGWFFAPSFGVAAIFRFILFFQGFHNWTLNPFHMMGVAGVLGAALLCAIHGATVENTLFEDGDGANTFRAFNPTQAEETYSMVTANRFWSQIFGVAFSNKRWLHFFMLFVPVTGLWMSALGVVGLALNLRAYDFVSQEIRAAEDPEFETFYTKNILLNEGIRAWMAAQDQPHENLIFPEEVLPRGNAL.

N-acetylthreonine is present on T2. T2 is modified (phosphothreonine). A helical transmembrane segment spans residues 41 to 61 (CAYFAVGGWFTGTTFVTSWYT). H118 contributes to the chlorophyll a binding site. Residues 125-141 (GFMLRQFELARSVQLRP) traverse the membrane as a helical segment. Positions 130 and 143 each coordinate pheophytin a. Residues 153–166 (VFVSVFLIYPLGQS) traverse the membrane as a helical segment. Residue H198 coordinates chlorophyll a. A helical transmembrane segment spans residues 208–228 (AALLCAIHGATVENTLFEDGD). Residues H215 and F262 each coordinate a plastoquinone. Residue H215 participates in Fe cation binding. Residue H269 participates in Fe cation binding. A helical transmembrane segment spans residues 279 to 295 (GLWMSALGVVGLALNLR).

The protein belongs to the reaction center PufL/M/PsbA/D family. As to quaternary structure, PSII is composed of 1 copy each of membrane proteins PsbA, PsbB, PsbC, PsbD, PsbE, PsbF, PsbH, PsbI, PsbJ, PsbK, PsbL, PsbM, PsbT, PsbX, PsbY, PsbZ, Psb30/Ycf12, at least 3 peripheral proteins of the oxygen-evolving complex and a large number of cofactors. It forms dimeric complexes. The D1/D2 heterodimer binds P680, chlorophylls that are the primary electron donor of PSII, and subsequent electron acceptors. It shares a non-heme iron and each subunit binds pheophytin, quinone, additional chlorophylls, carotenoids and lipids. There is also a Cl(-1) ion associated with D1 and D2, which is required for oxygen evolution. The PSII complex binds additional chlorophylls, carotenoids and specific lipids. serves as cofactor.

The protein localises to the plastid. The protein resides in the chloroplast thylakoid membrane. It catalyses the reaction 2 a plastoquinone + 4 hnu + 2 H2O = 2 a plastoquinol + O2. Photosystem II (PSII) is a light-driven water:plastoquinone oxidoreductase that uses light energy to abstract electrons from H(2)O, generating O(2) and a proton gradient subsequently used for ATP formation. It consists of a core antenna complex that captures photons, and an electron transfer chain that converts photonic excitation into a charge separation. The D1/D2 (PsbA/PsbD) reaction center heterodimer binds P680, the primary electron donor of PSII as well as several subsequent electron acceptors. D2 is needed for assembly of a stable PSII complex. The sequence is that of Photosystem II D2 protein from Nicotiana tabacum (Common tobacco).